The chain runs to 318 residues: Taste receptor type 2 member 60 (318 aa).

The Extracellular segment spans residues 1 to 7 (MNGDHMV). The chain crosses the membrane as a helical span at residues 8–28 (LGSSMTDEKAIILVIILLLLC). The Cytoplasmic portion of the chain corresponds to 29-40 (LVAIAGNCFITA). The helical transmembrane segment at 41 to 61 (ALGMEWVLQRMLLPCDKLLVS) threads the bilayer. Residues 62–88 (LGASRFCPQWVVMGKTTYVFLYPTAFP) are Extracellular-facing. A helical membrane pass occupies residues 89–109 (YNPVLRFLAFQWDLLNAATLW). Topologically, residues 110–128 (FSTWLSVFYCVKIATFTHP) are cytoplasmic. A helical transmembrane segment spans residues 129 to 149 (VFLWLKHKLSEWVPWMLFSSV). Topologically, residues 150-183 (GLSSFTTILFFIGNHRVYQSYLRNHLQPWNVTGN) are extracellular. The N-linked (GlcNAc...) asparagine glycan is linked to Asn-179. A helical transmembrane segment spans residues 184-204 (SIWSYCEKFYLFPLKMITWTM). The Cytoplasmic portion of the chain corresponds to 205 to 234 (PTAVFFICMILLITSLGRHMKKALLTNSGF). Residues 235–255 (RDPSVQAHIKAMLALLSFAML) form a helical membrane-spanning segment. Topologically, residues 256 to 264 (FISYFLSLV) are extracellular. A helical transmembrane segment spans residues 265 to 285 (FSAAGIFPPLDFKFWVWESVI). Topologically, residues 286-318 (YLCAAVHPIILLFSNRRLRAVLKRCRSSRCGTP) are cytoplasmic.

Belongs to the G-protein coupled receptor T2R family.

It localises to the membrane. Functionally, receptor that may play a role in the perception of bitterness and is gustducin-linked. May play a role in sensing the chemical composition of the gastrointestinal content. The activity of this receptor may stimulate alpha gustducin, mediate PLC-beta-2 activation and lead to the gating of TRPM5. The chain is Taste receptor type 2 member 60 (TAS2R60) from Pongo pygmaeus (Bornean orangutan).